The following is a 423-amino-acid chain: Carboxypeptidase S1 (423 aa).

Cystine bridges form between C8/C68, C55/C300, C223/C246, and C230/C239. Residue S143 is part of the active site. N-linked (GlcNAc...) asparagine glycosylation occurs at N200. D340 is an active-site residue. C343 contacts substrate. Residue H397 is part of the active site. Residue E398 coordinates substrate.

It belongs to the peptidase S10 family.

It carries out the reaction Preferential release of a C-terminal arginine or lysine residue.. The chain is Carboxypeptidase S1 from Penicillium janthinellum (Penicillium vitale).